Reading from the N-terminus, the 312-residue chain is Pantothenate kinase (312 aa).

ATP is bound at residue 97–104; the sequence is GSVAVGKS.

This sequence belongs to the prokaryotic pantothenate kinase family.

It is found in the cytoplasm. The enzyme catalyses (R)-pantothenate + ATP = (R)-4'-phosphopantothenate + ADP + H(+). Its pathway is cofactor biosynthesis; coenzyme A biosynthesis; CoA from (R)-pantothenate: step 1/5. The protein is Pantothenate kinase of Mycobacterium bovis (strain BCG / Pasteur 1173P2).